A 329-amino-acid chain; its full sequence is D-alanine--D-alanine ligase (329 aa).

The 207-residue stretch at 120 to 326 folds into the ATP-grasp domain; it reads KLWLSAIGIP…FADYLEQILR (207 aa). An ATP-binding site is contributed by 150-205; that stretch reads ALAKWGKVFIKAASQGSSVGCYSASNEADLVKGIADAFGYSEQVLIEKAVKPRELE. Asp280, Glu293, and Asn295 together coordinate Mg(2+).

The protein belongs to the D-alanine--D-alanine ligase family. It depends on Mg(2+) as a cofactor. Mn(2+) serves as cofactor.

The protein resides in the cytoplasm. The enzyme catalyses 2 D-alanine + ATP = D-alanyl-D-alanine + ADP + phosphate + H(+). The protein operates within cell wall biogenesis; peptidoglycan biosynthesis. Its function is as follows. Cell wall formation. The protein is D-alanine--D-alanine ligase of Aeromonas hydrophila subsp. hydrophila (strain ATCC 7966 / DSM 30187 / BCRC 13018 / CCUG 14551 / JCM 1027 / KCTC 2358 / NCIMB 9240 / NCTC 8049).